Here is a 38-residue protein sequence, read N- to C-terminus: Large ribosomal subunit protein bL36 (38 aa).

It belongs to the bacterial ribosomal protein bL36 family.

In Wigglesworthia glossinidia brevipalpis, this protein is Large ribosomal subunit protein bL36.